The primary structure comprises 300 residues: tRNA uridine(34) hydroxylase (300 aa).

The Rhodanese domain occupies 128 to 222; the sequence is ADPEVIVVDT…YLEDVPQAQS (95 aa). Cysteine 182 functions as the Cysteine persulfide intermediate in the catalytic mechanism.

The protein belongs to the TrhO family.

It carries out the reaction uridine(34) in tRNA + AH2 + O2 = 5-hydroxyuridine(34) in tRNA + A + H2O. Its function is as follows. Catalyzes oxygen-dependent 5-hydroxyuridine (ho5U) modification at position 34 in tRNAs. The protein is tRNA uridine(34) hydroxylase of Deinococcus radiodurans (strain ATCC 13939 / DSM 20539 / JCM 16871 / CCUG 27074 / LMG 4051 / NBRC 15346 / NCIMB 9279 / VKM B-1422 / R1).